The primary structure comprises 367 residues: Protein trichome birefringence-like 39 (367 aa).

A helical; Signal-anchor for type II membrane protein membrane pass occupies residues G7–N29. The GDS motif motif lies at G120–S122. The DCXHWCLPGXXDXWN motif motif lies at D343 to N357.

The protein belongs to the PC-esterase family. TBL subfamily.

Its subcellular location is the membrane. In terms of biological role, may act as a bridging protein that binds pectin and other cell wall polysaccharides. Probably involved in maintaining esterification of pectins. May be involved in the specific O-acetylation of cell wall polymers. This is Protein trichome birefringence-like 39 (TBL39) from Arabidopsis thaliana (Mouse-ear cress).